A 69-amino-acid chain; its full sequence is Sec-independent protein translocase protein TatA (69 aa).

The helical transmembrane segment at 1-21 (MFGLGGQELILILMIILLLFG) threads the bilayer. The tract at residues 49 to 69 (EFNKAMDDETPKKKDFGPDRE) is disordered.

It belongs to the TatA/E family. As to quaternary structure, forms a complex with TatC.

The protein resides in the cell inner membrane. Its function is as follows. Part of the twin-arginine translocation (Tat) system that transports large folded proteins containing a characteristic twin-arginine motif in their signal peptide across membranes. TatA could form the protein-conducting channel of the Tat system. In Chlorobium luteolum (strain DSM 273 / BCRC 81028 / 2530) (Pelodictyon luteolum), this protein is Sec-independent protein translocase protein TatA.